The following is a 291-amino-acid chain: uncharacterized protein (291 aa).

The interval 1–55 (MRTHDIPRSPLVGHKKNAAPDGIGASRACCPARENEPFKKGSTNSRGGGVEWSRS) is disordered. The next 2 helical transmembrane spans lie at 74 to 96 (WWAVGPVLGICAGVWGAAHPVHA) and 188 to 210 (YYYLAIPVALTAGYTVAFWRIRL).

It to T.pallidum TP_0733.

The protein localises to the cell membrane. This is an uncharacterized protein from Treponema pallidum (strain Nichols).